Reading from the N-terminus, the 349-residue chain is Cytoplasmic tRNA 2-thiolation protein 2 (349 aa).

This sequence belongs to the CTU2/NCS2 family.

The protein resides in the cytoplasm. It participates in tRNA modification; 5-methoxycarbonylmethyl-2-thiouridine-tRNA biosynthesis. Functionally, plays a central role in 2-thiolation of mcm(5)S(2)U at tRNA wobble positions of tRNA(Lys), tRNA(Glu) and tRNA(Gln). May act by forming a heterodimer with tut-1/ctu-1 that ligates sulfur from thiocarboxylated urm-1 onto the uridine of tRNAs at wobble position. This Caenorhabditis briggsae protein is Cytoplasmic tRNA 2-thiolation protein 2.